The following is a 79-amino-acid chain: Small ribosomal subunit protein bS18B (79 aa).

It belongs to the bacterial ribosomal protein bS18 family. In terms of assembly, part of the 30S ribosomal subunit. Forms a tight heterodimer with protein bS6.

Functionally, binds as a heterodimer with protein bS6 to the central domain of the 16S rRNA, where it helps stabilize the platform of the 30S subunit. This Mycolicibacterium gilvum (strain PYR-GCK) (Mycobacterium gilvum (strain PYR-GCK)) protein is Small ribosomal subunit protein bS18B.